The primary structure comprises 201 residues: Peptide deformylase (201 aa).

A compositionally biased stretch (polar residues) spans 1–17 (MANNFSQLARKSKTNSP). The tract at residues 1 to 24 (MANNFSQLARKSKTNSPIEKVSKE) is disordered. Residues C121 and H163 each coordinate Fe cation. The active site involves E164. H167 is a binding site for Fe cation.

It belongs to the polypeptide deformylase family. Requires Fe(2+) as cofactor.

The catalysed reaction is N-terminal N-formyl-L-methionyl-[peptide] + H2O = N-terminal L-methionyl-[peptide] + formate. Functionally, removes the formyl group from the N-terminal Met of newly synthesized proteins. Requires at least a dipeptide for an efficient rate of reaction. N-terminal L-methionine is a prerequisite for activity but the enzyme has broad specificity at other positions. The chain is Peptide deformylase from Prochlorococcus marinus subsp. pastoris (strain CCMP1986 / NIES-2087 / MED4).